Consider the following 254-residue polypeptide: 5'-nucleotidase SurE (254 aa).

Positions 8, 9, 40, and 93 each coordinate a divalent metal cation.

It belongs to the SurE nucleotidase family. It depends on a divalent metal cation as a cofactor.

Its subcellular location is the cytoplasm. The enzyme catalyses a ribonucleoside 5'-phosphate + H2O = a ribonucleoside + phosphate. Nucleotidase that shows phosphatase activity on nucleoside 5'-monophosphates. This Methylobacterium radiotolerans (strain ATCC 27329 / DSM 1819 / JCM 2831 / NBRC 15690 / NCIMB 10815 / 0-1) protein is 5'-nucleotidase SurE.